The primary structure comprises 274 residues: 2-dehydro-3-deoxyphosphooctonate aldolase (274 aa).

Belongs to the KdsA family.

Its subcellular location is the cytoplasm. It catalyses the reaction D-arabinose 5-phosphate + phosphoenolpyruvate + H2O = 3-deoxy-alpha-D-manno-2-octulosonate-8-phosphate + phosphate. It participates in carbohydrate biosynthesis; 3-deoxy-D-manno-octulosonate biosynthesis; 3-deoxy-D-manno-octulosonate from D-ribulose 5-phosphate: step 2/3. It functions in the pathway bacterial outer membrane biogenesis; lipopolysaccharide biosynthesis. The sequence is that of 2-dehydro-3-deoxyphosphooctonate aldolase from Rickettsia felis (strain ATCC VR-1525 / URRWXCal2) (Rickettsia azadi).